The chain runs to 1357 residues: MAYSYTEKKRIRKDFSKLPDVMDVPYLLAIQLDSYREFLQAGASKDQFRDVGLHAAFKSVFPIISYSGNAALEYVGYRLGEPAFDVKECVLRGVTFAVPLRVKVRLIIFDKESSNKAIKDIKEQEVYMGEIPLMTENGTFVINGTERVIVSQLHRSPGVFFDHDRGKTHSSGKLLYSARIIPYRGSWLDFEFDPKDCVFVRIDRRRKLPASVLLRALGYSTEEVLNTFYTTNVFHLSGEKLSLELVPQRLRGEVAVMDIHDGSGKVIVEQGRRITARHINQLEKAGVKELDVPLEYVLGRTTAKAIVHPATGEILAECNTELTTDLLVKIAKAQVVRIETLYTNDIDCGPFISDTLKIDTTSNQLEALVEIYRMMRPGEPPTKDAAETLFNNLFFSAERYDLSAVGRMKFNRRIGRTEIEGSGVLSKEDIVEVLKTLVDIRNGKGIVDDIDHLGNRRVRCVGEMAENQFRVGLVRVERAVKERLSMAESEGLMPQDLINAKPVAAAVKEFFGSSQLSQFMGQNNPLSEITHKRRVSALGPGGLTRERAGFEVRDVHPTHYGRVCPIETPEGPNIGLINSLAAYARTNQYGFLESPYRVVKEGVVSDDIVFLSAIEEADHVIAQASAAMNEKKQLIDELVAVRHLNEFTVKAPEDVTLMDVSPKQVVSVAASLIPFLEHDDANRALMGSNMQRQAVPTLRADKPLVGTGMERNVARDSGVCVVARRGGVIDSVDASRIVVRVADDEVETGEAGVDIYNLTKYTRSNQNTCINQRPLVSKGDVVARGDIMADGPSTDMGELALGQNMRIAFMAWNGFNFEDSICLSERVVQEDRFTTIHIQELTCVARDTKLGPEEITADIPNVGEAALNKLDEAGIVYVGAEVGAGDILVGKVTPKGETQLTPEEKLLRAIFGEKASDVKDTSLRVPTGTKGTVIDVQVFTRDGVERDSRALAIEKMQLDEIRKDLNEEFRIVEGATFERLRAALNGQVVDGGAGLKKGTVITDDVLNGLEHGQWFKLRMAEDALNEQLEKAQQYIVDRRRLLDDKFEDKKRKLQQGDDLAPGVLKIVKVYLAIRRRIQPGDKMAGRHGNKGVVSVIMPVEDMPHDANGTPVDVVLNPLGVPSRMNVGQILETHLGLAAKGLGEKIDRMIEEQRKAAELRTFLTEIYNEIGGRQENLEEFTDEEIMALANNLKKGVPMATPVFDGAKEREIKAMLKLADLPESGQMQLFDGRTGNKFERSVTVGYMYMLKLNHLVDDKMHARSTGSYSLVTQQPLGGKAQFGGQRFGEMEVWALEAYGAAYTLQEMLTVKSDDVNGRTKMYKNIVDGDHRMEPGMPESFNVLIKEIRSLGIDIDLETE.

It belongs to the RNA polymerase beta chain family. In terms of assembly, the RNAP catalytic core consists of 2 alpha, 1 beta, 1 beta' and 1 omega subunit. When a sigma factor is associated with the core the holoenzyme is formed, which can initiate transcription.

It catalyses the reaction RNA(n) + a ribonucleoside 5'-triphosphate = RNA(n+1) + diphosphate. In terms of biological role, DNA-dependent RNA polymerase catalyzes the transcription of DNA into RNA using the four ribonucleoside triphosphates as substrates. The sequence is that of DNA-directed RNA polymerase subunit beta from Pseudomonas entomophila (strain L48).